A 262-amino-acid chain; its full sequence is Zinc import ATP-binding protein ZnuC (262 aa).

Residues 6–221 (IRLDKVAVTL…PAFVELFGKN (216 aa)) form the ABC transporter domain. Position 38-45 (38-45 (GPNGAGKT)) interacts with ATP.

This sequence belongs to the ABC transporter superfamily. Zinc importer (TC 3.A.1.15.5) family. As to quaternary structure, the complex is composed of two ATP-binding proteins (ZnuC), two transmembrane proteins (ZnuB) and a solute-binding protein (ZnuA).

It is found in the cell inner membrane. The catalysed reaction is Zn(2+)(out) + ATP(in) + H2O(in) = Zn(2+)(in) + ADP(in) + phosphate(in) + H(+)(in). Functionally, part of the ABC transporter complex ZnuABC involved in zinc import. Responsible for energy coupling to the transport system. The sequence is that of Zinc import ATP-binding protein ZnuC from Pseudomonas syringae pv. syringae (strain B728a).